A 474-amino-acid polypeptide reads, in one-letter code: Gamma-aminobutyric acid receptor subunit beta-1 (474 aa).

The first 25 residues, 1–25 (MWTVQNRESLGLLSFPVMVAMVCCA), serve as a signal peptide directing secretion. Topologically, residues 26-245 (HSSNEPSNMS…SFRLKRNIGY (220 aa)) are extracellular. N-linked (GlcNAc...) asparagine glycans are attached at residues Asn33 and Asn105. Tyr122 provides a ligand contact to histamine. Cysteines 161 and 175 form a disulfide. N-linked (GlcNAc...) asparagine glycosylation is present at Asn174. Histamine contacts are provided by residues 181–182 (SY) and Thr227. Positions 182 and 227 each coordinate 4-aminobutanoate. The next 3 helical transmembrane spans lie at 246-267 (FILQTYMPSTLITILSWVSFWI), 271-293 (ASAARVALGITTVLTMTTISTHL), and 305-327 (AIDIYLMGCFVFVFLALLEYAFV). The Cytoplasmic segment spans residues 328 to 451 (NYIFFGKGPQ…DLTDVNSIDK (124 aa)). A helical membrane pass occupies residues 452–473 (WSRMFFPITFSLFNVVYWLYYV).

The protein belongs to the ligand-gated ion channel (TC 1.A.9) family. Gamma-aminobutyric acid receptor (TC 1.A.9.5) subfamily. GABRB1 sub-subfamily. As to quaternary structure, heteropentamer, formed by a combination of alpha (GABRA1-6), beta (GABRB1-3), gamma (GABRG1-3), delta (GABRD), epsilon (GABRE), rho (GABRR1-3), pi (GABRP) and theta (GABRQ) chains, each subunit exhibiting distinct physiological and pharmacological properties. Binds UBQLN1.

The protein localises to the postsynaptic cell membrane. Its subcellular location is the cell membrane. The enzyme catalyses chloride(in) = chloride(out). With respect to regulation, potentiated by histamine. Beta subunit of the heteropentameric ligand-gated chloride channel gated by gamma-aminobutyric acid (GABA), a major inhibitory neurotransmitter in the brain. GABA-gated chloride channels, also named GABA(A) receptors (GABAAR), consist of five subunits arranged around a central pore and contain GABA active binding site(s) located at the alpha and beta subunit interface(s). When activated by GABA, GABAARs selectively allow the flow of chloride anions across the cell membrane down their electrochemical gradient. Chloride influx into the postsynaptic neuron following GABAAR opening decreases the neuron ability to generate a new action potential, thereby reducing nerve transmission. Beta-containing GABAARs can simultaneously bind GABA and histamine where histamine binds at the interface of two neighboring beta subunits, which may be involved in the regulation of sleep and wakefulness. In Mus musculus (Mouse), this protein is Gamma-aminobutyric acid receptor subunit beta-1.